Reading from the N-terminus, the 568-residue chain is Putative ABC transporter ATP-binding protein EF_2153 (568 aa).

ABC transporter domains lie at Ile-6–Glu-247 and Leu-301–Lys-535. ATP contacts are provided by residues Gly-40–Ser-47 and Gly-335–Ser-342.

The protein belongs to the ABC transporter superfamily.

Its subcellular location is the cell membrane. Functionally, probably part of an ABC transporter complex. Responsible for energy coupling to the transport system. The protein is Putative ABC transporter ATP-binding protein EF_2153 of Enterococcus faecalis (strain ATCC 700802 / V583).